The sequence spans 308 residues: E3 ubiquitin-protein ligase RING2 (308 aa).

N-acetylserine is present on serine 2. Positions 2 to 179 (SQAVQTNGTQ…AEDNGDSSHC (178 aa)) are interaction with HIP2. A Phosphoserine modification is found at serine 41. The RING-type zinc-finger motif lies at 51–91 (CPICLDMLKNTMTTKECLHRFCADCIITALRSGNKECPTCR). An interaction with nucleosomes via an acidic patch on histone H2A and histone H2B region spans residues 93-98 (KLVSKR). A Glycyl lysine isopeptide (Lys-Gly) (interchain with G-Cter in ubiquitin) cross-link involves residue lysine 112. Phosphoserine is present on residues serine 143 and serine 168. Residues 157 to 206 (QRGKKQQIENGSGAEDNGDSSHCSNASTHSNQEAGPSNKRTKTSDDSGLE) form a disordered region. The segment covering 176–191 (SSHCSNASTHSNQEAG) has biased composition (polar residues). A Glycyl lysine isopeptide (Lys-Gly) (interchain with G-Cter in SUMO2) cross-link involves residue lysine 249.

In terms of assembly, component of chromatin-associated Polycomb (PcG) complexes. Component of a number of PRC1-like complexes; these complexes contain either the polycomb group ring finger protein PCGF1, or PCGF2, or PCGF3, or BMI1, or PCGF5, or PCGF6. Distinct PRC1-like complexes are composed of a RING1 subunit (RING1B or RING1A), one of the six PCGF proteins (PCGF1, PCGF2, PCGF3, BMI1, PCGF5 or PCGF6), one PHC protein (PHC1, PHC2 or PHC3) and one of the CBX proteins (CBX2, CBX4, CBX6, CBX7 or CBX8). Part of a complex that contains RNF2, UB2D3 and BMI1; within that complex RNF2 and BMI1 form a tight heterodimer, where UB2D3 interacts only with RNF2. The complex composed of RNF2, UB2D3 and BMI1 binds nucleosomes, and has activity only with nucleosomal histone H2A. Part of a complex that contains PCGF5, RNF2 and UBE2D3. Part of a complex that contains AUTS2, PCGF5, RNF2, CSNK2B and RYBP. Interacts with CBX6 and CBX8. Interacts with PHC1, PCGF2, RYBP, CBX7, CBX4, CBX2, RNF1/RING1, BMI1 and PHC2. Interaction with RYBP and CBX7 is mutually exclusive; both compete for the same binding site on RNF2. Component of repressive BCOR complex containing a Polycomb group subcomplex at least composed of RYBP, PCGF1, BCOR and RING1. Interacts with CBX2 and PHC1. Interacts with CHTOP. Interacts with AURKB. Part of the E2F6.com-1 complex in G0 phase composed of E2F6, MGA, MAX, TFDP1, CBX3, BAT8, EUHMTASE1, RNF1/RING1, RNF2/RING2, MBLR, L3MBTL2 and YAF2. Component of some MLL1/MLL complex, at least composed of the core components KMT2A/MLL1, ASH2L, HCFC1/HCF1, WDR5 and RBBP5, as well as the facultative components BACC1, CHD8, E2F6, HSP70, INO80C, KANSL1, LAS1L, MAX, MCRS1, MGA, MYST1/MOF, PELP1, PHF20, PRP31, RING2, RUVB1/TIP49A, RUVB2/TIP49B, SENP3, TAF1, TAF4, TAF6, TAF7, TAF9 and TEX10. Interacts with RYBP, HIP2 and TFCP2. Interacts with NUPR1. Interacts with SAMD7 in a PHC2-dependent manner. Post-translationally, monoubiquitinated, by auto-ubiquitination. Polyubiquitinated in the presence of UBE2D3 (in vitro).

The protein resides in the nucleus. It localises to the cytoplasm. The protein localises to the chromosome. The enzyme catalyses S-ubiquitinyl-[E2 ubiquitin-conjugating enzyme]-L-cysteine + [acceptor protein]-L-lysine = [E2 ubiquitin-conjugating enzyme]-L-cysteine + N(6)-ubiquitinyl-[acceptor protein]-L-lysine.. It functions in the pathway protein modification; protein ubiquitination. E3 ubiquitin-protein ligase that mediates monoubiquitination of 'Lys-119' of histone H2A (H2AK119Ub), thereby playing a central role in histone code and gene regulation. H2AK119Ub gives a specific tag for epigenetic transcriptional repression and participates in X chromosome inactivation of female mammals. May be involved in the initiation of both imprinted and random X inactivation. Essential component of a Polycomb group (PcG) multiprotein PRC1-like complex, a complex class required to maintain the transcriptionally repressive state of many genes, including Hox genes, throughout development. PcG PRC1 complex acts via chromatin remodeling and modification of histones, rendering chromatin heritably changed in its expressibility. E3 ubiquitin-protein ligase activity is enhanced by BMI1/PCGF4. Acts as the main E3 ubiquitin ligase on histone H2A of the PRC1 complex, while RING1 may rather act as a modulator of RNF2/RING2 activity. Plays a role in the transcriptional repression of genes that are required for pluripotency in embryonic stem cells, thereby contributing to differentiation of the ectodermal and endodermal germ layers. Association with the chromosomal DNA is cell-cycle dependent. In resting B- and T-lymphocytes, interaction with AURKB leads to block its activity, thereby maintaining transcription in resting lymphocytes. Also acts as a negative regulator of autophagy by mediating ubiquitination of AMBRA1, leading to its subsequent degradation. In Rattus norvegicus (Rat), this protein is E3 ubiquitin-protein ligase RING2 (Rnf2).